Here is a 234-residue protein sequence, read N- to C-terminus: Leucyl/phenylalanyl-tRNA--protein transferase (234 aa).

This sequence belongs to the L/F-transferase family.

The protein localises to the cytoplasm. The catalysed reaction is N-terminal L-lysyl-[protein] + L-leucyl-tRNA(Leu) = N-terminal L-leucyl-L-lysyl-[protein] + tRNA(Leu) + H(+). It catalyses the reaction N-terminal L-arginyl-[protein] + L-leucyl-tRNA(Leu) = N-terminal L-leucyl-L-arginyl-[protein] + tRNA(Leu) + H(+). It carries out the reaction L-phenylalanyl-tRNA(Phe) + an N-terminal L-alpha-aminoacyl-[protein] = an N-terminal L-phenylalanyl-L-alpha-aminoacyl-[protein] + tRNA(Phe). Its function is as follows. Functions in the N-end rule pathway of protein degradation where it conjugates Leu, Phe and, less efficiently, Met from aminoacyl-tRNAs to the N-termini of proteins containing an N-terminal arginine or lysine. The protein is Leucyl/phenylalanyl-tRNA--protein transferase of Myxococcus xanthus (strain DK1622).